The following is a 125-amino-acid chain: Translation initiation factor 5A (125 aa).

Lysine 35 bears the Hypusine mark.

This sequence belongs to the eIF-5A family.

It localises to the cytoplasm. Its function is as follows. Functions by promoting the formation of the first peptide bond. The sequence is that of Translation initiation factor 5A (eIF5A) from Methanoculleus marisnigri (strain ATCC 35101 / DSM 1498 / JR1).